A 64-amino-acid polypeptide reads, in one-letter code: U9-ctenitoxin-Pr1a (64 aa).

5 cysteine pairs are disulfide-bonded: Cys-3–Cys-15, Cys-9–Cys-24, Cys-14–Cys-47, Cys-34–Cys-55, and Cys-49–Cys-61.

As to expression, expressed by the venom gland.

It is found in the secreted. Non-toxic to mice and insects. This is U9-ctenitoxin-Pr1a from Phoneutria reidyi (Brazilian Amazonian armed spider).